Here is a 302-residue protein sequence, read N- to C-terminus: GrpE protein homolog 1, mitochondrial (302 aa).

The N-terminal 39 residues, 1–39, are a transit peptide targeting the mitochondrion; it reads MLVSRVLSRVSRSAGLRSSFSSVVTPKRNQIPIVASRFH. The tract at residues 77-97 is disordered; that stretch reads SAEPKGNESNTEVPKTGETSE.

The protein belongs to the GrpE family. In terms of assembly, probable component of the PAM complex, at least composed of SSC1 (mtHsp70), MGE1, TIM44, PAM16/TIM16, PAM17 and PAM18/TIM14. Interacts with SSQ1.

The protein resides in the mitochondrion matrix. In terms of biological role, essential component of the PAM complex, a complex required for the translocation of transit peptide-containing proteins from the inner membrane into the mitochondrial matrix in an ATP-dependent manner. Seems to control the nucleotide-dependent binding of mitochondrial HSP70 to substrate proteins. Binds ATP. Interacts with copper ions Cu(2+). The sequence is that of GrpE protein homolog 1, mitochondrial from Arabidopsis thaliana (Mouse-ear cress).